The primary structure comprises 210 residues: Na(+)-translocating NADH-quinone reductase subunit D (210 aa).

The next 5 helical transmembrane spans lie at 42 to 62 (FVMTLAVMFVTALSNFFVSLI), 72 to 92 (IIVQMAIIASLVIVVDQILKA), 103 to 123 (VFVGLIITNCIVMGRAEAFAM), 131 to 151 (FIDGIGNGLGYGFVLMTVGFF), and 178 to 198 (NGLMLLAPSAFFLIGFMIWAI).

The protein belongs to the NqrDE/RnfAE family. Composed of six subunits; NqrA, NqrB, NqrC, NqrD, NqrE and NqrF.

It is found in the cell inner membrane. It carries out the reaction a ubiquinone + n Na(+)(in) + NADH + H(+) = a ubiquinol + n Na(+)(out) + NAD(+). Its function is as follows. NQR complex catalyzes the reduction of ubiquinone-1 to ubiquinol by two successive reactions, coupled with the transport of Na(+) ions from the cytoplasm to the periplasm. NqrA to NqrE are probably involved in the second step, the conversion of ubisemiquinone to ubiquinol. The protein is Na(+)-translocating NADH-quinone reductase subunit D of Vibrio cholerae serotype O1 (strain M66-2).